We begin with the raw amino-acid sequence, 29 residues long: Brevinin-2Tc (29 aa).

An intrachain disulfide couples cysteine 23 to cysteine 29.

Belongs to the frog skin active peptide (FSAP) family. Brevinin subfamily. As to expression, expressed by the skin glands.

Its subcellular location is the secreted. Antibacterial activity against representative Gram-negative and Gram-positive bacteria. The sequence is that of Brevinin-2Tc from Rana temporaria (European common frog).